The sequence spans 314 residues: tRNA pseudouridine synthase B (314 aa).

His-43 provides a ligand contact to substrate. The Nucleophile role is filled by Asp-48. Substrate is bound by residues Tyr-76, Tyr-179, and Leu-200.

Belongs to the pseudouridine synthase TruB family. Type 1 subfamily.

It catalyses the reaction uridine(55) in tRNA = pseudouridine(55) in tRNA. Functionally, responsible for synthesis of pseudouridine from uracil-55 in the psi GC loop of transfer RNAs. The protein is tRNA pseudouridine synthase B of Cronobacter sakazakii (strain ATCC BAA-894) (Enterobacter sakazakii).